Reading from the N-terminus, the 202-residue chain is Small ribosomal subunit protein uS4c-1 (202 aa).

The 63-residue stretch at 90–152 (MRLDNIVLRA…NKSRQLIDLN (63 aa)) folds into the S4 RNA-binding domain.

This sequence belongs to the universal ribosomal protein uS4 family. As to quaternary structure, part of the 30S ribosomal subunit. Contacts protein S5. The interaction surface between S4 and S5 is involved in control of translational fidelity.

Its subcellular location is the plastid. It localises to the chloroplast. In terms of biological role, one of the primary rRNA binding proteins, it binds directly to 16S rRNA where it nucleates assembly of the body of the 30S subunit. Its function is as follows. With S5 and S12 plays an important role in translational accuracy. This chain is Small ribosomal subunit protein uS4c-1, found in Cyanidium caldarium (Red alga).